We begin with the raw amino-acid sequence, 354 residues long: tRNA N6-adenosine threonylcarbamoyltransferase (354 aa).

Fe cation contacts are provided by histidine 115 and histidine 119. Substrate-binding positions include leucine 138–glycine 142, aspartate 171, glycine 184, and asparagine 276. Aspartate 304 lines the Fe cation pocket.

Belongs to the KAE1 / TsaD family. Fe(2+) is required as a cofactor.

The protein localises to the cytoplasm. It carries out the reaction L-threonylcarbamoyladenylate + adenosine(37) in tRNA = N(6)-L-threonylcarbamoyladenosine(37) in tRNA + AMP + H(+). Required for the formation of a threonylcarbamoyl group on adenosine at position 37 (t(6)A37) in tRNAs that read codons beginning with adenine. Is involved in the transfer of the threonylcarbamoyl moiety of threonylcarbamoyl-AMP (TC-AMP) to the N6 group of A37, together with TsaE and TsaB. TsaD likely plays a direct catalytic role in this reaction. This Xanthomonas oryzae pv. oryzae (strain MAFF 311018) protein is tRNA N6-adenosine threonylcarbamoyltransferase.